Reading from the N-terminus, the 849-residue chain is Villin-1 (849 aa).

Gelsolin-like repeat units follow at residues 30–107 (IEKS…DKFL), 147–213 (RVTE…EDGK), 262–335 (VPVE…TVEF), 405–475 (QEQL…PEMF), and 527–566 (AIQV…DHNL). The disordered stretch occupies residues 739–849 (ETPERSLRKS…AVATGTPRRL (111 aa)). Low complexity-rich tracts occupy residues 747 to 782 (KSSS…SAST) and 791 to 823 (PAAL…STPS).

The protein belongs to the villin/gelsolin family.

The protein localises to the cytoplasm. It is found in the cytoskeleton. Functionally, ca(2+)-independent actin-binding protein. Binds actin microfilaments (MFs). Involved in actin filament bundling, severing and capping. Caps the barbed end of actin filaments and protects them from disassembly. Promotes VLN3-mediated MF severing. In Oryza sativa subsp. indica (Rice), this protein is Villin-1.